Here is a 378-residue protein sequence, read N- to C-terminus: CST complex subunit STN1 (378 aa).

Residues 8–195 (MECESSPREE…KVYDQPFRNP (188 aa)) are interaction with CTC1. Positions 64–165 (VDIMGAVISV…EICANIYYKV (102 aa)) form a DNA-binding region, OB. Winged helix-turn-helix (wHTH) stretches follow at residues 201-305 (EALN…YVTT) and 306-378 (KDKD…YAAF).

This sequence belongs to the STN1 family. Component of the CST complex, composed of TEN1/C17orf106, CTC1/C17orf68 and STN1; in the complex interacts directly with TEN1 and CTC1. Interacts with ACD/TPP1. Interacts with POT1 and POLA1.

The protein localises to the nucleus. Its subcellular location is the chromosome. It localises to the telomere. Its function is as follows. Component of the CST complex proposed to act as a specialized replication factor promoting DNA replication under conditions of replication stress or natural replication barriers such as the telomere duplex. The CST complex binds single-stranded DNA with high affinity in a sequence-independent manner, while isolated subunits bind DNA with low affinity by themselves. Initially the CST complex has been proposed to protect telomeres from DNA degradation. However, the CST complex has been shown to be involved in several aspects of telomere replication. The CST complex inhibits telomerase and is involved in telomere length homeostasis; it is proposed to bind to newly telomerase-synthesized 3' overhangs and to terminate telomerase action implicating the association with the ACD:POT1 complex thus interfering with its telomerase stimulation activity. The CST complex is also proposed to be involved in fill-in synthesis of the telomeric C-strand probably implicating recruitment and activation of DNA polymerase alpha. The CST complex facilitates recovery from many forms of exogenous DNA damage; seems to be involved in the re-initiation of DNA replication at repaired forks and/or dormant origins. Required for efficicient replication of the duplex region of the telomere. Promotes efficient replication of lagging-strand telomeres. Promotes general replication start following replication-fork stalling implicating new origin firing. May be in involved in C-strand fill-in during late S/G2 phase independent of its role in telomere duplex replication. In Mus musculus (Mouse), this protein is CST complex subunit STN1.